Reading from the N-terminus, the 164-residue chain is MTEFTHINQQGHAKMVDVSDKQITKRTAVAHSSITVNETIFKQISNNTNTKGNVLNTAQIAGIMAAKNTSTLIPMCHPLPLTGIDVHFSWDETNAPLYTLNIQTTVSTTGKTGVEMEALTAASATALTIYDMTKAVDKGMIIGETYLESKSGGKSGDFQRQSNQ.

Residues 75–77 (MCH) and 116–117 (ME) contribute to the substrate site. Asp131 is a catalytic residue.

Belongs to the MoaC family. As to quaternary structure, homohexamer; trimer of dimers.

It carries out the reaction (8S)-3',8-cyclo-7,8-dihydroguanosine 5'-triphosphate = cyclic pyranopterin phosphate + diphosphate. It functions in the pathway cofactor biosynthesis; molybdopterin biosynthesis. Functionally, catalyzes the conversion of (8S)-3',8-cyclo-7,8-dihydroguanosine 5'-triphosphate to cyclic pyranopterin monophosphate (cPMP). This chain is Cyclic pyranopterin monophosphate synthase, found in Staphylococcus aureus (strain USA300).